Consider the following 568-residue polypeptide: DEAD-box ATP-dependent RNA helicase 51 (568 aa).

2 stretches are compositionally biased toward basic and acidic residues: residues 1-13 and 23-47; these read MVESDKSSVEELK and KKNEQQKAEEKTHTVEENADETQKK. The tract at residues 1–70 is disordered; the sequence is MVESDKSSVE…EEEEKVEAME (70 aa). Residues 13-78 are a coiled coil; it reads KKRVRKRSRG…MEDGEDEKNI (66 aa). A compositionally biased stretch (acidic residues) spans 60–70; sequence EEEEEKVEAME. The short motif at 89–117 is the Q motif element; sequence VTFDSLDLSEQTSIAIKEMGFQYMTQIQA. The Helicase ATP-binding domain occupies 120–295; it reads IQPLLEGKDV…RVSLTSPVHV (176 aa). 133-140 serves as a coordination point for ATP; it reads ARTGSGKT. The DEAD box motif lies at 243–246; that stretch reads DEAD. One can recognise a Helicase C-terminal domain in the interval 321 to 468; the sequence is RLILLISFLK…ELEFNEKRLS (148 aa). Residues 540-568 are disordered; the sequence is KVRKARKQQGRNGFSPYSPYGKSTPTKEA.

Belongs to the DEAD box helicase family. DDX18/HAS1 subfamily.

It carries out the reaction ATP + H2O = ADP + phosphate + H(+). This is DEAD-box ATP-dependent RNA helicase 51 (RH51) from Arabidopsis thaliana (Mouse-ear cress).